A 158-amino-acid polypeptide reads, in one-letter code: SsrA-binding protein (158 aa).

This sequence belongs to the SmpB family.

Its subcellular location is the cytoplasm. Functionally, required for rescue of stalled ribosomes mediated by trans-translation. Binds to transfer-messenger RNA (tmRNA), required for stable association of tmRNA with ribosomes. tmRNA and SmpB together mimic tRNA shape, replacing the anticodon stem-loop with SmpB. tmRNA is encoded by the ssrA gene; the 2 termini fold to resemble tRNA(Ala) and it encodes a 'tag peptide', a short internal open reading frame. During trans-translation Ala-aminoacylated tmRNA acts like a tRNA, entering the A-site of stalled ribosomes, displacing the stalled mRNA. The ribosome then switches to translate the ORF on the tmRNA; the nascent peptide is terminated with the 'tag peptide' encoded by the tmRNA and targeted for degradation. The ribosome is freed to recommence translation, which seems to be the essential function of trans-translation. The chain is SsrA-binding protein from Bifidobacterium longum (strain DJO10A).